A 176-amino-acid polypeptide reads, in one-letter code: Ribosome maturation factor RimM (176 aa).

A PRC barrel domain is found at 101-170; that stretch reads EGEYFESDLI…RITVELPEGL (70 aa).

Belongs to the RimM family. In terms of assembly, binds ribosomal protein uS19.

The protein resides in the cytoplasm. Functionally, an accessory protein needed during the final step in the assembly of 30S ribosomal subunit, possibly for assembly of the head region. Essential for efficient processing of 16S rRNA. May be needed both before and after RbfA during the maturation of 16S rRNA. It has affinity for free ribosomal 30S subunits but not for 70S ribosomes. This Solibacter usitatus (strain Ellin6076) protein is Ribosome maturation factor RimM.